Consider the following 105-residue polypeptide: UPF0166 protein aq_450 (105 aa).

This sequence belongs to the UPF0166 family.

In Aquifex aeolicus (strain VF5), this protein is UPF0166 protein aq_450.